Reading from the N-terminus, the 414-residue chain is Cyclohex-1-ene-1-carbonyl-CoA dehydrogenase (414 aa).

Residue Asp124 is the Proton acceptor of the active site. FAD contacts are provided by Ala157, Thr158, Ser164, and Thr190. Ser164 serves as a coordination point for cyclohex-1-ene-1-carbonyl-CoA. Ser164 serves as a coordination point for cyclohexa-1,5-diene-1-carbonyl-CoA. The cyclohex-1-ene-1-carbonyl-CoA site is built by Lys211, Arg275, and Thr396. 3 residues coordinate cyclohexa-1,5-diene-1-carbonyl-CoA: Lys211, Arg275, and Thr396. The FAD site is built by Thr398 and Gln400. Residue Arg408 participates in cyclohex-1-ene-1-carbonyl-CoA binding. A cyclohexa-1,5-diene-1-carbonyl-CoA-binding site is contributed by Arg408.

The protein belongs to the acyl-CoA dehydrogenase family. As to quaternary structure, homotetramer. The cofactor is FAD.

It carries out the reaction cyclohex-1-ene-1-carbonyl-CoA + oxidized [electron-transfer flavoprotein] + H(+) = cyclohexa-1,5-diene-1-carbonyl-CoA + reduced [electron-transfer flavoprotein]. Mediates the conversion of cyclohex-1-ene-1-carbonyl-CoA (Ch1CoA) into (E)-2-cyclohex-1,5-diene-1-carbonyl-CoA in biosynthesis of cyclohexane-1-carboxylate, a by-product produced during fermentation of benzoate and crotonate to acetate. Also able to further convert (E)-2-cyclohex-1,5-diene-1-carbonyl-CoA to benzoyl-CoA. The chain is Cyclohex-1-ene-1-carbonyl-CoA dehydrogenase from Syntrophus aciditrophicus (strain SB).